Consider the following 479-residue polypeptide: BURP domain-containing protein 4 (479 aa).

The first 46 residues, 1–46, serve as a signal peptide directing secretion; the sequence is MVGKGNECAAARRRFSLRAAAASSSSSSFLPCLLLAAALSAGCCRA. The disordered stretch occupies residues 158-177; that stretch reads RADGPPKQPATFPASPNGEK. The 226-residue stretch at 254–479 folds into the BURP domain; it reads LFLMKKLHPG…PQGYVLWLAN (226 aa). N-linked (GlcNAc...) asparagine glycosylation is present at Asn445.

In terms of tissue distribution, expressed in stamen.

In Oryza sativa subsp. japonica (Rice), this protein is BURP domain-containing protein 4 (BURP4).